We begin with the raw amino-acid sequence, 295 residues long: UDP-N-acetylenolpyruvoylglucosamine reductase (295 aa).

The 166-residue stretch at 23–188 folds into the FAD-binding PCMH-type domain; it reads KVGGPADFLA…ISAKFALKPG (166 aa). Arg167 is an active-site residue. The active-site Proton donor is Ser217. Glu287 is a catalytic residue.

This sequence belongs to the MurB family. FAD is required as a cofactor.

It localises to the cytoplasm. The enzyme catalyses UDP-N-acetyl-alpha-D-muramate + NADP(+) = UDP-N-acetyl-3-O-(1-carboxyvinyl)-alpha-D-glucosamine + NADPH + H(+). It functions in the pathway cell wall biogenesis; peptidoglycan biosynthesis. Cell wall formation. This is UDP-N-acetylenolpyruvoylglucosamine reductase from Streptococcus pyogenes serotype M49 (strain NZ131).